A 943-amino-acid chain; its full sequence is Lactoferrin-binding protein A (943 aa).

Positions methionine 1–alanine 27 are cleaved as a signal peptide. Residues arginine 52–lysine 178 form the TBDR plug domain. The 755-residue stretch at serine 189–phenylalanine 943 folds into the TBDR beta-barrel domain. The TonB C-terminal box signature appears at glycine 926–phenylalanine 943.

This sequence belongs to the TonB-dependent receptor family.

The protein localises to the cell outer membrane. Unknown. May be an iron-siderophore receptor. This Neisseria meningitidis serogroup B (strain ATCC BAA-335 / MC58) protein is Lactoferrin-binding protein A (lbpA).